Consider the following 252-residue polypeptide: Uridylate kinase (252 aa).

20-23 (KLSG) contributes to the ATP binding site. Residues 28–33 (GGGGLG) are involved in allosteric activation by GTP. Glycine 62 contacts UMP. Residues glycine 63 and arginine 67 each coordinate ATP. UMP contacts are provided by residues aspartate 82 and 143 to 150 (MGMPYFST). ATP contacts are provided by asparagine 171, tyrosine 177, and aspartate 180.

It belongs to the UMP kinase family. In terms of assembly, homohexamer.

It localises to the cytoplasm. The enzyme catalyses UMP + ATP = UDP + ADP. Its pathway is pyrimidine metabolism; CTP biosynthesis via de novo pathway; UDP from UMP (UMPK route): step 1/1. Allosterically activated by GTP. Inhibited by UTP. Catalyzes the reversible phosphorylation of UMP to UDP. This chain is Uridylate kinase, found in Streptomyces avermitilis (strain ATCC 31267 / DSM 46492 / JCM 5070 / NBRC 14893 / NCIMB 12804 / NRRL 8165 / MA-4680).